The following is a 294-amino-acid chain: Small ribosomal subunit protein uS2 (294 aa).

Positions 232–245 (RAAEQDKAADDKAQ) are enriched in basic and acidic residues. Residues 232–294 (RAAEQDKAAD…GSEEDGEAAN (63 aa)) form a disordered region. A compositionally biased stretch (low complexity) spans 246 to 265 (EQAAAEAAKPEPAAPAPAAE).

Belongs to the universal ribosomal protein uS2 family.

The sequence is that of Small ribosomal subunit protein uS2 from Desulfatibacillum aliphaticivorans.